We begin with the raw amino-acid sequence, 614 residues long: Sulfite reductase [NADPH] flavoprotein alpha-component (614 aa).

Positions 79–217 constitute a Flavodoxin-like domain; the sequence is LTIIFASQTG…AATEWRKQVL (139 aa). Residues 85 to 90, 132 to 135, and 168 to 177 contribute to the FMN site; these read SQTGNA, STNG, and LGDSSYQFFC. The region spanning 249–463 is the FAD-binding FR-type domain; the sequence is EQPYTASLST…VEHNNNFKLP (215 aa). FAD contacts are provided by residues threonine 337, threonine 371, 401–404, 419–421, tyrosine 425, and 434–437; these read RLYS, TVG, and GGAS. NADP(+)-binding positions include 534–535, 540–544, and aspartate 576; these read SR and KVYVQ. An FAD-binding site is contributed by tyrosine 614.

This sequence belongs to the NADPH-dependent sulphite reductase flavoprotein subunit CysJ family. In the N-terminal section; belongs to the flavodoxin family. The protein in the C-terminal section; belongs to the flavoprotein pyridine nucleotide cytochrome reductase family. In terms of assembly, alpha(8)-beta(8). The alpha component is a flavoprotein, the beta component is a hemoprotein. FAD is required as a cofactor. FMN serves as cofactor.

The catalysed reaction is hydrogen sulfide + 3 NADP(+) + 3 H2O = sulfite + 3 NADPH + 4 H(+). The protein operates within sulfur metabolism; hydrogen sulfide biosynthesis; hydrogen sulfide from sulfite (NADPH route): step 1/1. In terms of biological role, component of the sulfite reductase complex that catalyzes the 6-electron reduction of sulfite to sulfide. This is one of several activities required for the biosynthesis of L-cysteine from sulfate. The flavoprotein component catalyzes the electron flow from NADPH -&gt; FAD -&gt; FMN to the hemoprotein component. This Vibrio cholerae serotype O1 (strain ATCC 39315 / El Tor Inaba N16961) protein is Sulfite reductase [NADPH] flavoprotein alpha-component.